A 310-amino-acid polypeptide reads, in one-letter code: p-hydroxybenzoic acid efflux pump subunit AaeA (310 aa).

Residues 12–32 form a helical membrane-spanning segment; it reads AITVVLVILAFIAIFNAWVYY.

This sequence belongs to the membrane fusion protein (MFP) (TC 8.A.1) family.

It localises to the cell inner membrane. Forms an efflux pump with AaeB. The chain is p-hydroxybenzoic acid efflux pump subunit AaeA from Escherichia coli O7:K1 (strain IAI39 / ExPEC).